Reading from the N-terminus, the 602-residue chain is Elongation factor 4 (602 aa).

Positions 5-187 (DHIRNFSIIA…ALVKRIPAPK (183 aa)) constitute a tr-type G domain. GTP-binding positions include 17–22 (DHGKST) and 134–137 (NKID).

It belongs to the TRAFAC class translation factor GTPase superfamily. Classic translation factor GTPase family. LepA subfamily.

The protein resides in the cell inner membrane. The enzyme catalyses GTP + H2O = GDP + phosphate + H(+). Functionally, required for accurate and efficient protein synthesis under certain stress conditions. May act as a fidelity factor of the translation reaction, by catalyzing a one-codon backward translocation of tRNAs on improperly translocated ribosomes. Back-translocation proceeds from a post-translocation (POST) complex to a pre-translocation (PRE) complex, thus giving elongation factor G a second chance to translocate the tRNAs correctly. Binds to ribosomes in a GTP-dependent manner. In Zymomonas mobilis subsp. mobilis (strain ATCC 31821 / ZM4 / CP4), this protein is Elongation factor 4.